A 1496-amino-acid chain; its full sequence is Chromosome partition protein MukB (1496 aa).

63 to 70 (GGNGAGKS) contacts ATP. 2 coiled-coil regions span residues 328-493 (KLEL…QRLS) and 536-632 (KMQA…APAW). Residues 694 to 811 (PDGSDDVRLN…EVPLFGRAAR (118 aa)) form a flexible hinge region. Coiled-coil stretches lie at residues 861-1171 (NPEE…SAEE) and 1235-1291 (IDAI…LQNI). A compositionally biased stretch (basic and acidic residues) spans 1082–1091 (RARSRRDELQ). The tract at residues 1082–1101 (RARSRRDELQQRLSQQRSRK) is disordered.

It belongs to the SMC family. MukB subfamily. In terms of assembly, homodimerization via its hinge domain. Binds to DNA via its C-terminal region. Interacts, and probably forms a ternary complex, with MukE and MukF via its C-terminal region. The complex formation is stimulated by calcium or magnesium. Interacts with tubulin-related protein FtsZ.

It localises to the cytoplasm. The protein localises to the nucleoid. Plays a central role in chromosome condensation, segregation and cell cycle progression. Functions as a homodimer, which is essential for chromosome partition. Involved in negative DNA supercoiling in vivo, and by this means organize and compact chromosomes. May achieve or facilitate chromosome segregation by condensation DNA from both sides of a centrally located replisome during cell division. This is Chromosome partition protein MukB from Actinobacillus pleuropneumoniae serotype 3 (strain JL03).